A 279-amino-acid polypeptide reads, in one-letter code: Pantothenate synthetase (279 aa).

Position 27–34 (27–34 (MGYLHEGH)) interacts with ATP. Residue histidine 34 is the Proton donor of the active site. Glutamine 58 provides a ligand contact to (R)-pantoate. Position 58 (glutamine 58) interacts with beta-alanine. 144–147 (GKKD) contributes to the ATP binding site. Residue glutamine 150 coordinates (R)-pantoate. ATP is bound by residues valine 173 and 181–184 (MSSR).

Belongs to the pantothenate synthetase family. As to quaternary structure, homodimer.

Its subcellular location is the cytoplasm. It catalyses the reaction (R)-pantoate + beta-alanine + ATP = (R)-pantothenate + AMP + diphosphate + H(+). Its pathway is cofactor biosynthesis; (R)-pantothenate biosynthesis; (R)-pantothenate from (R)-pantoate and beta-alanine: step 1/1. Catalyzes the condensation of pantoate with beta-alanine in an ATP-dependent reaction via a pantoyl-adenylate intermediate. This chain is Pantothenate synthetase, found in Geobacter sp. (strain M21).